A 2201-amino-acid polypeptide reads, in one-letter code: MADSNLPPSSAAAPAPEPGITEQPGPRSPPPSPPGLEEPLEGTNPDVPHPDLAPVAFFCLRQTTSPRNWCIKMVCNPWFECVSMLVILLNCVTLGMYQPCDDMECLSDRCKILQVFDDFIFIFFAMEMVLKMVALGIFGKKCYLGDTWNRLDFFIVMAGMVEYSLDLQNINLSAIRTVRVLRPLKAINRVPSMRILVNLLLDTLPMLGNVLLLCFFVFFIFGIIGVQLWAGLLRNRCFLEENFTIQGDVALPPYYQPEEDDEMPFICSLTGDNGIMGCHEIPPLKEQGRECCLSKDDVYDFGAGRQDLNASGLCVNWNRYYNVCRTGNANPHKGAINFDNIGYAWIVIFQVITLEGWVEIMYYVMDAHSFYNFIYFILLIIVGSFFMINLCLVVIATQFSETKQREHRLMLEQRQRYLSSSTVASYAEPGDCYEEIFQYVCHILRKAKRRALGLYQALQNRRQAMGPGTPAPAKPGPHAKEPSHCKLCPRHSPLDPTPHTLVQPISAILASDPSSCPHCQHEAGRRPSGLGSTDSGQEGSGSGGSAEAEANGDGPQSSEDGVSSDLGKEEEQEDGAARLCGDVWRETREKLRGIVDSKYFNRGIMMAILVNTVSMGIEHHEQPEELTNILEICNVVFTSMFALEMILKLAAFGLFDYLRNPYNIFDSIIVIISIWEIVGQADGGLSVLRTFRLLRVLKLVRFMPALRRQLVVLMKTMDNVATFCMLLMLFIFIFSILGMHIFGCKFSLRTDTGDTVPDRKNFDSLLWAIVTVFQILTQEDWNVVLYNGMASTTPWASLYFVALMTFGNYVLFNLLVAILVEGFQAEGDANRSYSDEDQSSSNLEEFDKLPEGLDNSRDLKLCPIPMTPNGHLDPSLPLGAHLGPAGTMGTAPRLSLQPDPVLVALDSRKSSVMSLGRMSYDQRSLSSSRSSYYGPWGRSGTWASRRSSWNSLKHKPPSAEHESLLSGEGGGSCVRACEGAREEAPTRTAPLHAPHAHHAHHGPHLAHRHRHHRRTLSLDTRDSVDLGELVPVVGAHSRAAWRGAGQAPGHEDCNGRMPNIAKDVFTKMDDCRDRGEDEEEIDYTLCFRVRKMIDVYKPDWCEVREDWSVYLFSPENKFRILCQTIIAHKLFDYVVLAFIFLNCITIALERPQIEAGSTERIFLTVSNYIFTAIFVGEMTLKVVSLGLYFGEQAYLRSSWNVLDGFLVFVSIIDIVVSVASAGGAKILGVLRVLRLLRTLRPLRVISRAPGLKLVVETLISSLKPIGNIVLICCAFFIIFGILGVQLFKGKFYHCLGVDTRNITNRSDCVAANYRWVHHKYNFDNLGQALMSLFVLASKDGWVNIMYNGLDAVAVDQQPVTNHNPWMLLYFISFLLIVSFFVLNMFVGVVVENFHKCRQHQEAEEARRREEKRLRRLEKKRRKAQRLPYYATYCPTRLLIHSMCTSHYLDIFITFIICLNVVTMSLEHYNQPTSLETALKYCNYMFTTVFVLEAVLKLVAFGLRRFFKDRWNQLDLAIVLLSVMGITLEEIEINAALPINPTIIRIMRVLRIARVLKLLKMATGMRALLDTVVQALPQVGNLGLLFMLLFFIYAALGVELFGKLVCNDENPCEGMSRHATFENFGMAFLTLFQVSTGDNWNGIMKDTLRDCTHDERSCLSSLQFVSPLYFVSFVLTAQFVLINVVVAVLMKHLDDSNKEAQEDAEMDAEIELEMAHGLGPCPGPCPGPCPCPWPLAPVLARGCPLVLLGATGARIGRGRCWRRHRESPVPSTRYSPAQETLWLDSVSLIIKDSLEGELTIIDNLSGSVFHHYASPDGCGKCHHDKQEVQLAETEAFSLNSDRSSSILLGDDLSLEDPTACPPGRKDSKGELDPPEPMRVGDLGECFFPLSSTAVSPDPENFLCEMEEIPFNPVQSWLKHDSSQAPPSPFSPDGSSPLLQMPAEFFHPAVSASQKGPEKGTGTGTLPKIALQGSWASLRSPSVNCTLLRQATGSDTSLDASPSSSAGSLQTTLEDSLTLSDSPRRALGPPVQVPGPRASLSPATRRRLSLRGRGLFSLRGLRAHQRSHSSGGSTSPGCTHHDSMDPSDEEGRGGAGGGGAGSEHSETLSSLSLTSLFCLPPTLPPPGLTPARKFNSTSSLAAGPGRPGSTVSARGLVRSPSWAADRSKDPPGQAQLVSGLGSSAPGPQPPPGESTDAASKRKR.

A disordered region spans residues 1–45 (MADSNLPPSSAAAPAPEPGITEQPGPRSPPPSPPGLEEPLEGTNP). Residues 1–76 (MADSNLPPSS…RNWCIKMVCN (76 aa)) are Cytoplasmic-facing. The span at 26–36 (PRSPPPSPPGL) shows a compositional bias: pro residues. An I repeat occupies 64 to 399 (TSPRNWCIKM…LCLVVIATQF (336 aa)). Residues 77–97 (PWFECVSMLVILLNCVTLGMY) form a helical membrane-spanning segment. The Extracellular portion of the chain corresponds to 98-115 (QPCDDMECLSDRCKILQV). Residues 116 to 137 (FDDFIFIFFAMEMVLKMVALGI) traverse the membrane as a helical segment. The Cytoplasmic segment spans residues 138 to 146 (FGKKCYLGD). Residues 147–166 (TWNRLDFFIVMAGMVEYSLD) form a helical membrane-spanning segment. Residues 167 to 171 (LQNIN) are Extracellular-facing. Asparagine 171 is a glycosylation site (N-linked (GlcNAc...) asparagine). Residues 172–189 (LSAIRTVRVLRPLKAINR) traverse the membrane as a helical segment. Topologically, residues 190-209 (VPSMRILVNLLLDTLPMLGN) are cytoplasmic. A helical transmembrane segment spans residues 210 to 230 (VLLLCFFVFFIFGIIGVQLWA). Residues 231 to 371 (GLLRNRCFLE…YYVMDAHSFY (141 aa)) are Extracellular-facing. 2 N-linked (GlcNAc...) asparagine glycosylation sites follow: asparagine 242 and asparagine 309. The chain crosses the membrane as a helical span at residues 372 to 396 (NFIYFILLIIVGSFFMINLCLVVIA). Residues 397-598 (TQFSETKQRE…EKLRGIVDSK (202 aa)) are Cytoplasmic-facing. 2 disordered regions span residues 463-500 (QAMGPGTPAPAKPGPHAKEPSHCKLCPRHSPLDPTPHT) and 513-579 (PSSC…AARL). The segment covering 545–554 (SAEAEANGDG) has biased composition (low complexity). One copy of the II repeat lies at 584-823 (WRETREKLRG…LLVAILVEGF (240 aa)). Residues 599 to 619 (YFNRGIMMAILVNTVSMGIEH) form a helical membrane-spanning segment. The Extracellular portion of the chain corresponds to 620–632 (HEQPEELTNILEI). Residues 633–654 (CNVVFTSMFALEMILKLAAFGL) form a helical membrane-spanning segment. Residues 655–660 (FDYLRN) lie on the Cytoplasmic side of the membrane. Residues 661–679 (PYNIFDSIIVIISIWEIVG) traverse the membrane as a helical segment. The Extracellular portion of the chain corresponds to 680-687 (QADGGLSV). Residues 688–711 (LRTFRLLRVLKLVRFMPALRRQLV) form a helical membrane-spanning segment. The Cytoplasmic segment spans residues 712-722 (VLMKTMDNVAT). Residues 723–743 (FCMLLMLFIFIFSILGMHIFG) form a helical membrane-spanning segment. Topologically, residues 744–795 (CKFSLRTDTGDTVPDRKNFDSLLWAIVTVFQILTQEDWNVVLYNGMASTTPW) are extracellular. Residues 796–820 (ASLYFVALMTFGNYVLFNLLVAILV) traverse the membrane as a helical segment. Over 821-1125 (EGFQAEGDAN…NKFRILCQTI (305 aa)) the chain is Cytoplasmic. Residues 936–969 (WGRSGTWASRRSSWNSLKHKPPSAEHESLLSGEG) form a disordered region. A compositionally biased stretch (polar residues) spans 941–951 (TWASRRSSWNS). Serine 1017 is subject to Phosphoserine. One copy of the III repeat lies at 1116–1393 (NKFRILCQTI…MFVGVVVENF (278 aa)). Residues 1126–1148 (IAHKLFDYVVLAFIFLNCITIAL) traverse the membrane as a helical segment. The Extracellular portion of the chain corresponds to 1149–1166 (ERPQIEAGSTERIFLTVS). The helical transmembrane segment at 1167–1187 (NYIFTAIFVGEMTLKVVSLGL) threads the bilayer. Residues 1188 to 1197 (YFGEQAYLRS) are Cytoplasmic-facing. Residues 1198-1217 (SWNVLDGFLVFVSIIDIVVS) traverse the membrane as a helical segment. Residues 1218–1231 (VASAGGAKILGVLR) are Extracellular-facing. The chain crosses the membrane as a helical span at residues 1232 to 1253 (VLRLLRTLRPLRVISRAPGLKL). Residues 1254–1263 (VVETLISSLK) are Cytoplasmic-facing. A helical membrane pass occupies residues 1264–1287 (PIGNIVLICCAFFIIFGILGVQLF). Residues 1288–1364 (KGKFYHCLGV…DQQPVTNHNP (77 aa)) are Extracellular-facing. 2 N-linked (GlcNAc...) asparagine glycosylation sites follow: asparagine 1301 and asparagine 1304. A helical membrane pass occupies residues 1365–1390 (WMLLYFISFLLIVSFFVLNMFVGVVV). At 1391-1445 (ENFHKCRQHQEAEEARRREEKRLRRLEKKRRKAQRLPYYATYCPTRLLIHSMCTS) the chain is on the cytoplasmic side. Residues 1431-1692 (TYCPTRLLIH…VVVAVLMKHL (262 aa)) form an IV repeat. Residues 1446-1466 (HYLDIFITFIICLNVVTMSLE) traverse the membrane as a helical segment. Residues 1467 to 1480 (HYNQPTSLETALKY) are Extracellular-facing. Residues 1481-1502 (CNYMFTTVFVLEAVLKLVAFGL) form a helical membrane-spanning segment. Residues 1503–1509 (RRFFKDR) lie on the Cytoplasmic side of the membrane. A helical transmembrane segment spans residues 1510–1528 (WNQLDLAIVLLSVMGITLE). The Extracellular portion of the chain corresponds to 1529–1542 (EIEINAALPINPTI). Residues 1543 to 1566 (IRIMRVLRIARVLKLLKMATGMRA) traverse the membrane as a helical segment. Over 1567–1580 (LLDTVVQALPQVGN) the chain is Cytoplasmic. The helical transmembrane segment at 1581–1601 (LGLLFMLLFFIYAALGVELFG) threads the bilayer. Residues 1602–1664 (KLVCNDENPC…RSCLSSLQFV (63 aa)) lie on the Extracellular side of the membrane. The chain crosses the membrane as a helical span at residues 1665–1692 (SPLYFVSFVLTAQFVLINVVVAVLMKHL). Residues 1693-1835 (DDSNKEAQED…EVQLAETEAF (143 aa)) lie on the Cytoplasmic side of the membrane. Disordered regions lie at residues 1846–1876 (LLGDDLSLEDPTACPPGRKDSKGELDPPEPM), 1916–1938 (LKHDSSQAPPSPFSPDGSSPLLQ), 1992–2045 (SDTS…TRRR), 2057–2105 (RGLR…HSET), and 2126–2201 (LTPA…KRKR). Positions 1992–2007 (SDTSLDASPSSSAGSL) are enriched in low complexity. 2 stretches are compositionally biased toward polar residues: residues 2008-2019 (QTTLEDSLTLSD) and 2066-2075 (HSSGGSTSPG). The segment covering 2077-2090 (THHDSMDPSDEEGR) has biased composition (basic and acidic residues).

Belongs to the calcium channel alpha-1 subunit (TC 1.A.1.11) family. CACNA1I subfamily. Interacts with CATSPER1 and CATSPER2, leading to suppress T-type calcium channel activity. In response to raising of intracellular calcium, the T-type channels are activated by CaM-kinase II. Brain.

It localises to the membrane. It catalyses the reaction Ca(2+)(in) = Ca(2+)(out). In terms of biological role, voltage-sensitive calcium channels (VSCC) mediate the entry of calcium ions into excitable cells and are also involved in a variety of calcium-dependent processes, including muscle contraction, hormone or neurotransmitter release, gene expression, cell motility, cell division and cell death. This channel gives rise to T-type calcium currents. T-type calcium channels belong to the 'low-voltage activated (LVA)' group and are strongly blocked by nickel and mibefradil. A particularity of this type of channels is an opening at quite negative potentials, and a voltage-dependent inactivation. T-type channels serve pacemaking functions in both central neurons and cardiac nodal cells and support calcium signaling in secretory cells and vascular smooth muscle. They may also be involved in the modulation of firing patterns of neurons which is important for information processing as well as in cell growth processes. Gates in voltage ranges similar to, but higher than alpha 1G or alpha 1H. Voltage-sensitive calcium channels (VSCC) mediate the entry of calcium ions into excitable cells and are also involved in a variety of calcium-dependent processes, including muscle contraction, hormone or neurotransmitter release, gene expression, cell motility, cell division and cell death. This channel gives rise to T-type calcium currents. This chain is Voltage-dependent T-type calcium channel subunit alpha-1I (Cacna1i), found in Rattus norvegicus (Rat).